A 278-amino-acid polypeptide reads, in one-letter code: 3-methyl-2-oxobutanoate hydroxymethyltransferase (278 aa).

Mg(2+) is bound by residues Asp-43 and Asp-82. 3-methyl-2-oxobutanoate-binding positions include 43–44 (DS), Asp-82, and Lys-112. Position 114 (Glu-114) interacts with Mg(2+). Glu-181 functions as the Proton acceptor in the catalytic mechanism.

Belongs to the PanB family. In terms of assembly, homodecamer; pentamer of dimers. Mg(2+) is required as a cofactor.

Its subcellular location is the cytoplasm. It catalyses the reaction 3-methyl-2-oxobutanoate + (6R)-5,10-methylene-5,6,7,8-tetrahydrofolate + H2O = 2-dehydropantoate + (6S)-5,6,7,8-tetrahydrofolate. It participates in cofactor biosynthesis; (R)-pantothenate biosynthesis; (R)-pantoate from 3-methyl-2-oxobutanoate: step 1/2. Its function is as follows. Catalyzes the reversible reaction in which hydroxymethyl group from 5,10-methylenetetrahydrofolate is transferred onto alpha-ketoisovalerate to form ketopantoate. The chain is 3-methyl-2-oxobutanoate hydroxymethyltransferase from Desulfitobacterium hafniense (strain Y51).